The following is a 311-amino-acid chain: Olfactory receptor 1N1 (311 aa).

Residues 1 to 23 are Extracellular-facing; that stretch reads MENQSSISEFFLRGISAPPEQQQ. A glycan (N-linked (GlcNAc...) asparagine) is linked at N3. Residues 24 to 47 form a helical membrane-spanning segment; the sequence is SLFGIFLCMYLVTLTGNLLIILAI. Over 48–55 the chain is Cytoplasmic; it reads GSDLHLHT. The helical transmembrane segment at 56–77 threads the bilayer; the sequence is PMYFFLANLSFVDMGLTSSTVT. Over 78-98 the chain is Extracellular; it reads KMLVNIQTRHHTISYTGCLTQ. C95 and C187 form a disulfide bridge. Residues 99–118 form a helical membrane-spanning segment; sequence MYFFLMFGDLDSFFLAAMAY. Over 119–137 the chain is Cytoplasmic; it reads DRYVAICHPLCYSTVMRPQ. Residues 138 to 156 form a helical membrane-spanning segment; sequence VCALMLALCWVLTNIVALT. The Extracellular portion of the chain corresponds to 157–194; that stretch reads HTFLMARLSFCVTGEIAHFFCDITPVLKLSCSDTHINE. A helical transmembrane segment spans residues 195 to 217; that stretch reads MMVFVLGGTVLIVPFLCIVTSYI. The Cytoplasmic segment spans residues 218–234; it reads HIVPAILRVRTRGGVGK. Residues 235–257 form a helical membrane-spanning segment; sequence AFSTCSSHLCVVCVFYGTLFSAY. At 258–270 the chain is on the extracellular side; that stretch reads LCPPSIASEEKDI. Residues 271-290 traverse the membrane as a helical segment; it reads AAAAMYTIVTPMLNPFIYSL. At 291–311 the chain is on the cytoplasmic side; that stretch reads RNKDMKGALKRLFSHRSIVSS.

It belongs to the G-protein coupled receptor 1 family.

It is found in the cell membrane. Its function is as follows. Odorant receptor. The protein is Olfactory receptor 1N1 (OR1N1) of Homo sapiens (Human).